Here is a 317-residue protein sequence, read N- to C-terminus: Transaldolase 1 (317 aa).

Lys132 acts as the Schiff-base intermediate with substrate in catalysis.

This sequence belongs to the transaldolase family. Type 1 subfamily. As to quaternary structure, homodimer.

The protein resides in the cytoplasm. It carries out the reaction D-sedoheptulose 7-phosphate + D-glyceraldehyde 3-phosphate = D-erythrose 4-phosphate + beta-D-fructose 6-phosphate. Its pathway is carbohydrate degradation; pentose phosphate pathway; D-glyceraldehyde 3-phosphate and beta-D-fructose 6-phosphate from D-ribose 5-phosphate and D-xylulose 5-phosphate (non-oxidative stage): step 2/3. Transaldolase is important for the balance of metabolites in the pentose-phosphate pathway. The protein is Transaldolase 1 of Shigella sonnei (strain Ss046).